The following is a 193-amino-acid chain: Non-specific lipid transfer protein GPI-anchored 10 (193 aa).

Positions Met-1–Ala-24 are cleaved as a signal peptide. 4 disulfides stabilise this stretch: Cys-30–Cys-71, Cys-40–Cys-55, Cys-56–Cys-98, and Cys-69–Cys-107. 3 N-linked (GlcNAc...) asparagine glycosylation sites follow: Asn-76, Asn-87, and Asn-103. Residues Ser-109–Asn-140 form a disordered region. Over residues Pro-116–Ser-132 the composition is skewed to low complexity. A glycan (N-linked (GlcNAc...) asparagine) is linked at Asn-140. Ser-168 carries the GPI-anchor amidated serine lipid modification. The propeptide at Ser-169–Ile-193 is removed in mature form.

The protein belongs to the plant LTP family.

It localises to the cell membrane. In terms of biological role, probable lipid transfer protein. In Arabidopsis thaliana (Mouse-ear cress), this protein is Non-specific lipid transfer protein GPI-anchored 10.